Reading from the N-terminus, the 554-residue chain is Phenylalanine--tRNA ligase beta subunit (554 aa).

The region spanning L276 to G351 is the B5 domain. Residues D329, D335, E338, and E339 each coordinate Mg(2+).

This sequence belongs to the phenylalanyl-tRNA synthetase beta subunit family. Type 2 subfamily. As to quaternary structure, tetramer of two alpha and two beta subunits. Mg(2+) serves as cofactor.

It localises to the cytoplasm. The enzyme catalyses tRNA(Phe) + L-phenylalanine + ATP = L-phenylalanyl-tRNA(Phe) + AMP + diphosphate + H(+). The polypeptide is Phenylalanine--tRNA ligase beta subunit (Methanococcus maripaludis (strain C5 / ATCC BAA-1333)).